Reading from the N-terminus, the 155-residue chain is Small ribosomal subunit protein uS7c (155 aa).

The protein belongs to the universal ribosomal protein uS7 family. In terms of assembly, part of the 30S ribosomal subunit.

The protein resides in the plastid. It localises to the chloroplast. Functionally, one of the primary rRNA binding proteins, it binds directly to 16S rRNA where it nucleates assembly of the head domain of the 30S subunit. The polypeptide is Small ribosomal subunit protein uS7c (rps7) (Saruma henryi (Upright wild ginger)).